Reading from the N-terminus, the 1096-residue chain is Adenylate-forming reductase Nps9 (1096 aa).

The tract at residues 39-352 is adenylation (A) domain; that stretch reads DDTLTEISFL…TTEFGAPTQL (314 aa). AMP contacts are provided by residues H236, 339–340, T344, and 425–428; these read VQ and IIGR. One can recognise a Carrier domain in the interval 569 to 656; that stretch reads EWTVSTLEHW…LLADRVAKIA (88 aa). At S605 the chain carries O-(pantetheine 4'-phosphoryl)serine. The interval 716–952 is reductase (R) domain; the sequence is LTGSTGGLGS…MPAEKVSAAI (237 aa). Residues 720–723, 807–809, Y880, and K884 contribute to the NADP(+) site; these read TGGL and SAW.

This sequence belongs to the adenylate-forming reductase family.

Its function is as follows. Adenylate-forming reductase, a natural product biosynthesis enzyme that resembles non-ribosomal peptide synthetases, yet serves to modify one substrate, rather than to condense two or more building blocks. The A-domain preferentially accepts L-threonine as substrate. The natural product of the enzyme is not yet known. This is Adenylate-forming reductase Nps9 from Serpula lacrymans var. lacrymans (strain S7.9) (Dry rot fungus).